Consider the following 1479-residue polypeptide: Rhoptry neck protein 2 (1479 aa).

An N-terminal signal peptide occupies residues 1-24 (MTKRAGLPLGRAFLVLILLSAADS). Over 25 to 1277 (LFFSSFPRSA…EQRRKSRKQA (1253 aa)) the chain is Cytoplasmic. Disordered stretches follow at residues 49–68 (PDSD…TFRP) and 291–316 (VYAT…SPTS). A helical membrane pass occupies residues 1278 to 1298 (IIGVLTLGMMGLYALLNVADI). The interaction with AMA1 stretch occupies residues 1297-1333 (DIVQHMEDIGGAPPVSCVTNEILGVTCAPQAIAKATT). Topologically, residues 1299-1479 (VQHMEDIGGA…FPMSAPLIKA (181 aa)) are extracellular. A disulfide bond links Cys-1313 and Cys-1323. Residues 1419 to 1445 (TYRKTEQETKQPPRPRNLHNPSSWGDT) form a disordered region.

Belongs to the apicomplexan parasites RON2 family. In terms of assembly, component of the moving junction (MJ) complex, composed of AMA1, a transmembrane protein on the parasite surface, and a complex of the rhoptry neck proteins RON2, RON4, RON5 and RON8 localized to the cytoplasmic face of the host plasma membrane. Interacts (via C-terminus) with AMA1 (via ectodomain); RON2 serves as the receptor for AMA1 on the host plasma membrane. AMA1 and the RON proteins are initially in distinct compartments within the parasite, namely the micronemes and the rhoptries, and interaction happens only upon initiation of invasion when the micronemes and rhoptries discharge.

The protein localises to the secreted. It localises to the cytoplasm. Its subcellular location is the host cell membrane. In terms of biological role, essential rhoptry neck protein that plays an important role in host cell invasion. Upon host invasion by tachyzoites, the protein is injected into the host cell where it functions as a receptor for apical membrane antigen 1 (AMA1) on the parasite. Part of the moving junction (MJ) complex, a ringlike structure formed between the plasma membranes of the apical tip of the parasite and the target host cell. During invasion, the MJ migrates from the anterior to the posterior of the parasite, leading to internalization of the parasite into a parasitophorous vacuole (PV). In Toxoplasma gondii (strain ATCC 50611 / Me49), this protein is Rhoptry neck protein 2 (RON2).